Reading from the N-terminus, the 268-residue chain is Indole-3-glycerol phosphate synthase (268 aa).

The protein belongs to the TrpC family.

The enzyme catalyses 1-(2-carboxyphenylamino)-1-deoxy-D-ribulose 5-phosphate + H(+) = (1S,2R)-1-C-(indol-3-yl)glycerol 3-phosphate + CO2 + H2O. Its pathway is amino-acid biosynthesis; L-tryptophan biosynthesis; L-tryptophan from chorismate: step 4/5. The polypeptide is Indole-3-glycerol phosphate synthase (Lachnospira eligens (strain ATCC 27750 / DSM 3376 / VPI C15-48 / C15-B4) (Eubacterium eligens)).